The sequence spans 263 residues: Orotidine 5'-phosphate decarboxylase (263 aa).

Residues aspartate 38, 60–62, 91–100, tyrosine 213, and arginine 232 contribute to the substrate site; these read KTH and DRKFADIGNT. Lysine 93 (proton donor) is an active-site residue.

The protein belongs to the OMP decarboxylase family.

The catalysed reaction is orotidine 5'-phosphate + H(+) = UMP + CO2. It participates in pyrimidine metabolism; UMP biosynthesis via de novo pathway; UMP from orotate: step 2/2. The polypeptide is Orotidine 5'-phosphate decarboxylase (PYR4) (Rhizomucor pusillus).